Reading from the N-terminus, the 235-residue chain is Aspartate/glutamate leucyltransferase (235 aa).

This sequence belongs to the R-transferase family. Bpt subfamily.

It is found in the cytoplasm. The catalysed reaction is N-terminal L-glutamyl-[protein] + L-leucyl-tRNA(Leu) = N-terminal L-leucyl-L-glutamyl-[protein] + tRNA(Leu) + H(+). It catalyses the reaction N-terminal L-aspartyl-[protein] + L-leucyl-tRNA(Leu) = N-terminal L-leucyl-L-aspartyl-[protein] + tRNA(Leu) + H(+). Functions in the N-end rule pathway of protein degradation where it conjugates Leu from its aminoacyl-tRNA to the N-termini of proteins containing an N-terminal aspartate or glutamate. In Pseudomonas fluorescens (strain Pf0-1), this protein is Aspartate/glutamate leucyltransferase.